We begin with the raw amino-acid sequence, 240 residues long: RxLR effector protein PexRD20 (240 aa).

A signal peptide spans 1–23 (MRCHYFVLLAVAAFLAGANVAVA). A RxLR-dEER motif is present at residues 43–58 (RALRSHTKATDHGEER).

It belongs to the RxLR effector family.

It is found in the secreted. The protein resides in the host cytoplasm. It localises to the host nucleus. The protein localises to the host nucleolus. Its function is as follows. Effector that enhances P.infestans colonization of Nicotiana benthamiana leaves. The chain is RxLR effector protein PexRD20 from Phytophthora infestans (strain T30-4) (Potato late blight agent).